A 750-amino-acid polypeptide reads, in one-letter code: MTIRSPEPEVKIVVEKDPVKTSFEKWAKPGHFSRTLAKGPSTTTWIWNLHADAHDFDSHTNDLEEVSRKVFSAHFGQLAIIFIWLSGMYFHGARFSNYEAWLGDPTHIKPSAQVVWPIVGQEILNGDVGGGFQGIQITSGFFQIWRASGITSELQLYSTAIGGLIFAALMLFAGWFHYHKAAPKLVWFQDVESMLNHHLAGLLGLGSLAWAGHQVHVSLPINELLDAGIDPKEIPLPHEFILNRDLLAQLFPSFAKGLTPFFTLNWSEYSDFLTFRGGLNPVTGGLWLTDTAHHHLAIAVVFLVAGHMYRTNWGIGHSIKEILEAHKGPFTGEGHKGLYEILTTSWHAQLALNLAMLGSLTIIVAHHMYSMPPYPYLAIDYSTQLSLFTHHMWIGGFTIVGAAAHAAIFMVRDYDPTSQYNNLLDRVLRHRDAIISHLNWACIFLGFHSFGLYIHNDTMSALGRPEDMFSDTAIQLQPIFAQWVQNTHVLAPNLTAPNATASTSLTWGGGDLVAVGGKVALLPISLGTADFLVHHIHAFTIHVTVLILLKGVLFARSSRLIPDKANLGFRFPCDGPGRGGTCQVSAWDHVFLGLFWMYNAISVVIFHFSWKMQSDVWGSLSNQGVVTHITGGNFAQSSITINGWLRDFLWAQAAQVIQSYGSSLSAYGLLFLGAHFVWAFSLMFLFSGRGYWQELIESIVWAHNKLKVAPAIQPRALSIVQGRAVGVAHYLLGGIATTWAFFLARIIAVG.

A run of 8 helical transmembrane segments spans residues 70-93 (VFSA…FHGA), 156-179 (LYST…FHYH), 195-219 (LNHH…HVSL), 291-309 (TAHH…GHMY), 346-369 (WHAQ…HHMY), 385-411 (LSLF…IFMV), 433-455 (AIIS…LYIH), and 531-549 (FLVH…LILL). [4Fe-4S] cluster-binding residues include Cys-573 and Cys-582. 2 helical membrane-spanning segments follow: residues 589–610 (HVFL…HFSW) and 664–686 (LSAY…MFLF). Position 675 (His-675) interacts with chlorophyll a'. Positions 683 and 691 each coordinate chlorophyll a. Residue Trp-692 participates in phylloquinone binding. A helical membrane pass occupies residues 724–744 (AVGVAHYLLGGIATTWAFFLA).

It belongs to the PsaA/PsaB family. In terms of assembly, the PsaA/B heterodimer binds the P700 chlorophyll special pair and subsequent electron acceptors. PSI consists of a core antenna complex that captures photons, and an electron transfer chain that converts photonic excitation into a charge separation. The eukaryotic PSI reaction center is composed of at least 11 subunits. It depends on P700 is a chlorophyll a/chlorophyll a' dimer, A0 is one or more chlorophyll a, A1 is one or both phylloquinones and FX is a shared 4Fe-4S iron-sulfur center. as a cofactor.

It is found in the plastid. It localises to the chloroplast thylakoid membrane. It carries out the reaction reduced [plastocyanin] + hnu + oxidized [2Fe-2S]-[ferredoxin] = oxidized [plastocyanin] + reduced [2Fe-2S]-[ferredoxin]. Its function is as follows. PsaA and PsaB bind P700, the primary electron donor of photosystem I (PSI), as well as the electron acceptors A0, A1 and FX. PSI is a plastocyanin-ferredoxin oxidoreductase, converting photonic excitation into a charge separation, which transfers an electron from the donor P700 chlorophyll pair to the spectroscopically characterized acceptors A0, A1, FX, FA and FB in turn. Oxidized P700 is reduced on the lumenal side of the thylakoid membrane by plastocyanin. This Anthoceros angustus (Hornwort) protein is Photosystem I P700 chlorophyll a apoprotein A1.